The sequence spans 37 residues: Large ribosomal subunit protein bL36 (37 aa).

This sequence belongs to the bacterial ribosomal protein bL36 family.

This chain is Large ribosomal subunit protein bL36, found in Azoarcus sp. (strain BH72).